We begin with the raw amino-acid sequence, 310 residues long: UDP-N-acetylenolpyruvoylglucosamine reductase (310 aa).

The FAD-binding PCMH-type domain maps to 23 to 188 (KVGGNAEIFF…LKAVFKVNKG (166 aa)). Arginine 168 is a catalytic residue. The active-site Proton donor is serine 217. Glutamate 287 is an active-site residue.

It belongs to the MurB family. The cofactor is FAD.

The protein resides in the cytoplasm. The enzyme catalyses UDP-N-acetyl-alpha-D-muramate + NADP(+) = UDP-N-acetyl-3-O-(1-carboxyvinyl)-alpha-D-glucosamine + NADPH + H(+). It participates in cell wall biogenesis; peptidoglycan biosynthesis. Functionally, cell wall formation. This chain is UDP-N-acetylenolpyruvoylglucosamine reductase, found in Rickettsia bellii (strain OSU 85-389).